Reading from the N-terminus, the 117-residue chain is Large ribosomal subunit protein bL20 (117 aa).

Belongs to the bacterial ribosomal protein bL20 family.

Its function is as follows. Binds directly to 23S ribosomal RNA and is necessary for the in vitro assembly process of the 50S ribosomal subunit. It is not involved in the protein synthesizing functions of that subunit. This Lawsonia intracellularis (strain PHE/MN1-00) protein is Large ribosomal subunit protein bL20.